The sequence spans 1482 residues: Type VII secretion system protein EssC (1482 aa).

The Cytoplasmic portion of the chain corresponds to 1–229 (MHKLIIKYNK…RPPQPIQKNN (229 aa)). Residues 230–252 (TVIWRSIIPPLVMIALTVVIFLV) traverse the membrane as a helical segment. Over 253–256 (RPIG) the chain is Extracellular. The chain crosses the membrane as a helical span at residues 257–279 (IYILMMIGMSTVTIVFGITTYFS). At 280–1482 (EKKKYNKDVE…EYQKIKLMEG (1203 aa)) the chain is on the cytoplasmic side. FtsK domains follow at residues 652 to 846 (DDIL…QDSN) and 997 to 1183 (QGPM…NELT). Residues 672–679 (GTTGSGKS) and 1014–1021 (GSPGYGRT) contribute to the ATP site.

It belongs to the EssC family. As to quaternary structure, homooligomer. Interacts with EsaE.

Its subcellular location is the cell membrane. Functionally, component of the type VII secretion system (Ess). Required for the secretion of substrates including EsxA and EsxB. However, unable to support secretion of the substrate protein EsxC. The polypeptide is Type VII secretion system protein EssC (Staphylococcus aureus (strain MRSA252)).